Here is a 467-residue protein sequence, read N- to C-terminus: 55 kDa erythrocyte membrane protein (467 aa).

Positions 73-154 (EVAFEKNQSE…VVTMKIIPRP (82 aa)) constitute a PDZ domain. Residues 160 to 230 (PCEMYMRGQF…PSPELQEWRA (71 aa)) enclose the SH3 domain. A Guanylate kinase-like domain is found at 283-452 (RKTLVLIGAP…SVKIVEEALE (170 aa)).

It belongs to the MAGUK family. In terms of processing, extensively palmitoylated.

It is found in the membrane. Its function is as follows. May play a role in the regulation of neutrophil polarization. The sequence is that of 55 kDa erythrocyte membrane protein (mpp1) from Takifugu rubripes (Japanese pufferfish).